A 537-amino-acid chain; its full sequence is Mitochondria-eating protein (537 aa).

The tract at residues 1–270 (MAESLKKLAK…SHSRSRSHSR (270 aa)) is interaction with YWHAG/14-3-3 protein gamma. A phosphoserine mark is found at Ser-13, Ser-85, Ser-123, Ser-127, Ser-154, and Ser-157. Residues 109 to 150 (SKNRDNSPDQDQHQSDNESFSETQPTQVQDDLAESGKSLEGA) are disordered. Residues 110–124 (KNRDNSPDQDQHQSD) are compositionally biased toward basic and acidic residues. Over residues 125-137 (NESFSETQPTQVQ) the composition is skewed to polar residues. 2 coiled-coil regions span residues 152–184 (NGSTISLLAAEEEINQLKKQLKSLQAQEDARHK) and 210–243 (QDVVSNYEKHLQNLKEEIAVLSAEKSGLQGRSAR). Disordered stretches follow at residues 171-212 (QLKS…PQDV) and 233-291 (EKSG…RAKM). Basic and acidic residues predominate over residues 179–209 (EDARHKTSENRRSEALKSDHRSTKRTQDQRP). Residues 239-251 (GRSARSPSPSTGT) show a composition bias toward low complexity. Positions 252 to 269 (RSHRRGRSRSHSRSRSHS) are enriched in basic residues. Ser-283, Ser-285, and Ser-508 each carry phosphoserine.

Belongs to the MIEAP family. As to quaternary structure, interacts (via coiled-coil domains) with BNIP3L (via BH3 domain). Interacts (via coiled-coil domains) with BNIP3 (via BH3 domain). Interacts with YWHAG/14-3-3 protein gamma; a protein that also plays a role in MALM. In terms of tissue distribution, in testis, expressed primarily in spermatids.

It is found in the cytoplasm. It localises to the cytosol. The protein localises to the mitochondrion outer membrane. Its subcellular location is the mitochondrion matrix. Key regulator of mitochondrial quality that mediates the repairing or degradation of unhealthy mitochondria in response to mitochondrial damage. Mediator of mitochondrial protein catabolic process (also named MALM) by mediating the degradation of damaged proteins inside mitochondria by promoting the accumulation in the mitochondrial matrix of hydrolases that are characteristic of the lysosomal lumen. Also involved in mitochondrion degradation of damaged mitochondria by promoting the formation of vacuole-like structures (named MIV), which engulf and degrade unhealthy mitochondria by accumulating lysosomes. The physical interaction of SPATA18/MIEAP, BNIP3 and BNIP3L/NIX at the mitochondrial outer membrane regulates the opening of a pore in the mitochondrial double membrane in order to mediate the translocation of lysosomal proteins from the cytoplasm to the mitochondrial matrix. Binds cardiolipin. May form molecular condensates (non-membrane-bounded organelles) within mitochondria that compartmentalize and promote cardiolipin metabolism. This Mus musculus (Mouse) protein is Mitochondria-eating protein (Spata18).